Consider the following 314-residue polypeptide: Methylglutaconyl-CoA hydratase, mitochondrial (314 aa).

Residues M1 to Y42 constitute a mitochondrion transit peptide. K75 is modified (N6-acetyllysine; alternate). K75 is subject to N6-succinyllysine; alternate. An RNA-binding region spans residues K80–K94. K84 carries the post-translational modification N6-succinyllysine. 2 positions are modified to N6-acetyllysine; alternate: K88 and K119. An N6-succinyllysine; alternate mark is found at K88 and K119. N6-succinyllysine occurs at positions 123 and 135. 2 positions are modified to N6-acetyllysine; alternate: K179 and K186. N6-succinyllysine; alternate is present on residues K179 and K186. Position 304 is an N6-succinyllysine (K304).

Belongs to the enoyl-CoA hydratase/isomerase family. In terms of assembly, homohexamer. In terms of tissue distribution, detected in heart, brain, liver, spleen, skeletal muscle and kidney. Expressed in brain, kidney, liver and spleen tissue (at protein level).

It is found in the mitochondrion. The enzyme catalyses (3S)-3-hydroxy-3-methylglutaryl-CoA = 3-methyl-(2E)-glutaconyl-CoA + H2O. It catalyses the reaction (3S)-citramalyl-CoA = itaconyl-CoA + H2O. The catalysed reaction is 3-hydroxyisovaleryl-CoA = 3-methylbut-2-enoyl-CoA + H2O. It carries out the reaction (S)-3-hydroxyglutaryl-CoA = (2E)-glutaconyl-CoA + H2O. Its pathway is amino-acid degradation; L-leucine degradation; (S)-3-hydroxy-3-methylglutaryl-CoA from 3-isovaleryl-CoA: step 3/3. Its function is as follows. Catalyzes the fifth step in the leucine degradation pathway, the reversible hydration of 3-methylglutaconyl-CoA (3-MG-CoA) to 3-hydroxy-3-methylglutaryl-CoA (HMG-CoA). Can catalyze the reverse reaction but at a much lower rate in vitro. HMG-CoA is then quickly degraded by another enzyme (such as HMG-CoA lyase) to give acetyl-CoA and acetoacetate. Uses other substrates such as (2E)-glutaconyl-CoA efficiently in vitro, and to a lesser extent 3-methylcrotonyl-CoA (3-methyl-(2E)-butenoyl-CoA), crotonyl-CoA ((2E)-butenoyl-CoA) and 3-hydroxybutanoyl-CoA (the missing carboxylate reduces affinity to the active site). Originally it was identified as an RNA-binding protein as it binds to AU-rich elements (AREs) in vitro. AREs direct rapid RNA degradation and mRNA deadenylation. Might have itaconyl-CoA hydratase activity, converting itaconyl-CoA into citramalyl-CoA in the C5-dicarboxylate catabolism pathway. The C5-dicarboxylate catabolism pathway is required to detoxify itaconate, an antimicrobial metabolite and immunomodulator produced by macrophages during certain infections, that can act as a vitamin B12-poisoning metabolite. The polypeptide is Methylglutaconyl-CoA hydratase, mitochondrial (Auh) (Mus musculus (Mouse)).